A 207-amino-acid polypeptide reads, in one-letter code: Claudin-11 (207 aa).

Position 1 (M1) is a topological domain, cytoplasmic. The helical transmembrane segment at 2–22 (VATCLQVVGFVTSFVGWIGVI) threads the bilayer. Topologically, residues 23–82 (VTTSTNDWVVTCGYTIPTCRKLDELGSKGLWADCVMATGLYHCKPLVDILILPGYVQACR) are extracellular. A helical transmembrane segment spans residues 83–103 (ALMIAASVLGLPAILLLLTVL). The Cytoplasmic segment spans residues 104–122 (PCIRMGQEPGVAKYRRAQL). A helical membrane pass occupies residues 123–143 (AGVLLILLALCALVATIWFPV). At 144 to 157 (CAHRETTIVSFGYS) the chain is on the extracellular side. Residues 158–178 (LYAGWIGAVLCLVGGCVILCC) form a helical membrane-spanning segment. Topologically, residues 179–207 (AGDAQAFGENRFYYTAGSSSPTHAKSAHV) are cytoplasmic. S197 and S198 each carry phosphoserine.

The protein belongs to the claudin family. In terms of assembly, interacts with tetraspanin-3/TSPAN3. Interacts with OCLN.

It is found in the cell junction. It localises to the tight junction. Its subcellular location is the cell membrane. Plays a major role in tight junction-specific obliteration of the intercellular space, through calcium-independent cell-adhesion activity. This is Claudin-11 (CLDN11) from Homo sapiens (Human).